The chain runs to 561 residues: Efflux pump bfoC (561 aa).

The tract at residues 1–55 (MSDTARILGGPSASSSRDGGMELNSFTEVSQTNSRSHSTKEEEGQVDDQQRPARE) is disordered. Residues 24 to 36 (NSFTEVSQTNSRS) are compositionally biased toward polar residues. Positions 38 to 55 (STKEEEGQVDDQQRPARE) are enriched in basic and acidic residues. Helical transmembrane passes span 59-79 (GVLG…CIFC), 103-123 (DVGW…LTFG), 128-148 (FFPI…GSFI), 164-184 (VAGL…SQCV), 194-214 (GFIM…GGAF), 222-242 (WCFY…LFTF), 257-277 (AVGL…CLLL), 293-313 (VVAL…LQLW), 335-355 (LYGF…PIWF), 378-398 (VVFA…GPFM), 425-445 (IGYQ…PIFV), 457-477 (TATA…VSVA), and 530-550 (VHTF…ATVI).

This sequence belongs to the major facilitator superfamily. TCR/Tet family.

The protein localises to the cell membrane. Functionally, efflux pump; part of the gene cluster that mediates the biosynthesis of bifonsecin B, a dimeric gamma-naphthopyrone. In Aspergillus brasiliensis (strain CBS 101740 / IMI 381727 / IBT 21946), this protein is Efflux pump bfoC.